A 226-amino-acid chain; its full sequence is ATP-dependent dethiobiotin synthetase BioD (226 aa).

Residue 12–17 (GVGKTV) participates in ATP binding. Residue Thr-16 coordinates Mg(2+). Lys-37 is an active-site residue. Residue Thr-41 coordinates substrate. ATP is bound by residues Asp-49, 108 to 111 (EGAG), and 169 to 170 (GS). Residues Asp-49 and Glu-108 each contribute to the Mg(2+) site.

The protein belongs to the dethiobiotin synthetase family. Homodimer. Mg(2+) serves as cofactor.

Its subcellular location is the cytoplasm. It carries out the reaction (7R,8S)-7,8-diammoniononanoate + CO2 + ATP = (4R,5S)-dethiobiotin + ADP + phosphate + 3 H(+). The protein operates within cofactor biosynthesis; biotin biosynthesis; biotin from 7,8-diaminononanoate: step 1/2. Catalyzes a mechanistically unusual reaction, the ATP-dependent insertion of CO2 between the N7 and N8 nitrogen atoms of 7,8-diaminopelargonic acid (DAPA, also called 7,8-diammoniononanoate) to form a ureido ring. In Mycobacterium marinum (strain ATCC BAA-535 / M), this protein is ATP-dependent dethiobiotin synthetase BioD.